A 292-amino-acid polypeptide reads, in one-letter code: Techylectin-5A (292 aa).

The N-terminal stretch at 1 to 23 is a signal peptide; the sequence is MHNLRNILFVITLIGQKYGLTSS. Q24 is subject to Pyrrolidone carboxylic acid. The 224-residue stretch at 63 to 286 folds into the Fibrinogen C-terminal domain; sequence PIVSPDPTDC…QVEMKIRPVE (224 aa). Residues C72 and C103 are joined by a disulfide bond. N-linked (GlcNAc...) asparagine glycosylation is found at N173, N198, and N214. 3 residues coordinate Ca(2+): D221, H225, and T227. C229 and C242 are joined by a disulfide.

As to quaternary structure, multimeric. PubMed:10468566 and PubMed:11707569 are in disagreement about the nature of the multimer, PubMed:10468566 finds hexamers and octamers, the results in PubMed:11707569 suggest tetramers. Strongly expressed in heart and intestine, weakly expressed in hepatopancreas. Not found in hemocytes, stomach, nervous tissue or skeletal muscle.

It is found in the secreted. In terms of biological role, lectin involved in innate immunity. Agglutinates all types of human erythrocytes, Gram-positive and Gram-negative bacteria. Has a stronger agglutinating activity towards Gram-negative bacteria than towards Gram-positive bacteria. Specifically recognizes acetyl group-containing substances on agglutinated cells. The hemagglutinating activity was inhibited by EDTA, acetyl group-containing mono- and disaccharides, N-acetyl derivatives of amino acids, other acetyl group-containing substances, propionamide and benzamide. Enhances the antimicrobial activity of big defensin against Gram-positive bacteria but not against Gram-negative bacteria. In Tachypleus tridentatus (Japanese horseshoe crab), this protein is Techylectin-5A.